The chain runs to 1037 residues: Multidrug resistance protein MdtF (1037 aa).

Residues 1-9 (MANYFIDRP) lie on the Cytoplasmic side of the membrane. A helical membrane pass occupies residues 10 to 28 (VFAWVLAIIMMLAGGLAIM). The Periplasmic portion of the chain corresponds to 29 to 339 (NLPVAQYPQI…TPFIEISIQE (311 aa)). Residues 340-359 (VFKTLVEAIILVFLVMYLFL) traverse the membrane as a helical segment. Topologically, residues 360 to 365 (QNFRAT) are cytoplasmic. A helical membrane pass occupies residues 366–385 (IIPTIAVPVVILGTFAILSA). Over 386 to 391 (VGFTIN) the chain is Periplasmic. Residues 392–413 (TLTMFGMVLAIGLLVDDAIVVV) traverse the membrane as a helical segment. Topologically, residues 414 to 441 (ENVERVIAEDKLPPKEATHKSMGQIQRA) are cytoplasmic. The helical transmembrane segment at 442-460 (LVGIAVVLSAVFMPMAFMS) threads the bilayer. Topologically, residues 461 to 473 (GATGEIYRQFSIT) are periplasmic. The chain crosses the membrane as a helical span at residues 474 to 496 (LISSMLLSVFVAMSLTPALCATI). Residues 497–536 (LKAAPEGGHKPNALFARFNTLFEKSTQHYTDSTRSLLRCT) lie on the Cytoplasmic side of the membrane. A helical transmembrane segment spans residues 537-555 (GRYMVVYLLICAGMAVLFL). The Periplasmic segment spans residues 556–870 (RTPTSFLPEE…SYQEALSSNQ (315 aa)). The helical transmembrane segment at 871 to 890 (APALYAISLVVVFLALAALY) threads the bilayer. Residues 891–896 (ESWSIP) lie on the Cytoplasmic side of the membrane. A helical membrane pass occupies residues 897 to 916 (FSVMLVVPLGVVGALLATDL). The Periplasmic segment spans residues 917–922 (RGLSND). A helical membrane pass occupies residues 923 to 944 (VYFQVGLLTTIGLSAKNAILIV). The Cytoplasmic portion of the chain corresponds to 945–972 (EFAVEMMQKEGKTPIEAIIEAARMRLRP). A helical transmembrane segment spans residues 973 to 991 (ILMTSLAFILGVLPLVISH). Over 992-1004 (GAGSGAQNAVGTG) the chain is Periplasmic. The helical transmembrane segment at 1005–1027 (VMGGMFAATVLAIYFVPVFFVVV) threads the bilayer. Residues 1028–1037 (EHLFARFKKA) are Cytoplasmic-facing.

Belongs to the resistance-nodulation-cell division (RND) (TC 2.A.6) family. In terms of assembly, homotrimer. Part of the tripartite efflux system MdtEF-TolC, which is composed of an inner membrane transporter, MdtF, a membrane fusion protein, MdtE, and an outer membrane component, TolC. The complex forms a large protein conduit and can translocate molecules across both the inner and outer membranes.

It is found in the cell inner membrane. Part of the tripartite efflux system MdtEF-TolC, which confers resistance to compounds such as rhodamine 6G, erythromycin, doxorubicin, ethidium bromide, TPP, SDS, deoxycholate, crystal violet and benzalkonium. This chain is Multidrug resistance protein MdtF (mdtF), found in Escherichia coli (strain K12).